We begin with the raw amino-acid sequence, 4753 residues long: Dynein heavy chain domain-containing protein 1 (4753 aa).

Coiled-coil stretches lie at residues 826-858 (IHAI…ALHE) and 936-991 (KLQQ…LSEL). The tract at residues 2688–2766 (HLGKDHQESE…SRGMKESISH (79 aa)) is disordered. Positions 2695–2712 (ESEEEEEEERVPEVESEG) are enriched in acidic residues. Residues 2740-2751 (RVSNSRDPSLTP) show a composition bias toward polar residues. 3 coiled-coil regions span residues 3125–3227 (LQQQ…MSKA), 3590–3651 (MRNQ…QGSK), and 4431–4460 (GAQL…LTHV). The tract at residues 3580–3657 (ALTEGRGKGL…QGSKPAYETQ (78 aa)) is disordered. The span at 3602 to 3615 (KEEDDESEESNEAE) shows a compositional bias: acidic residues. Residues 3616–3631 (DQTKEQKAEERKNEQE) show a composition bias toward basic and acidic residues. A compositionally biased stretch (acidic residues) spans 3632–3641 (KEQEENEEKE). A disordered region spans residues 4669-4697 (ALQDSPSSQPSPLPPVSISTQAPGTSDLP).

Belongs to the dynein heavy chain family. In terms of tissue distribution, expressed in spermatozoa (at protein level).

Its subcellular location is the cell projection. It localises to the cilium. It is found in the flagellum. Its function is as follows. Essential for the normal assembly and function of sperm flagella axonemes. This is Dynein heavy chain domain-containing protein 1 (DNHD1) from Homo sapiens (Human).